A 170-amino-acid chain; its full sequence is Tubulin polymerization-promoting protein family member 2 (170 aa).

A disordered region spans residues 127–170 (TGTHKERFDESGKGKGIAGREEMTDNTGYVSGYKGSGTYDKKTK). Residues 129 to 149 (THKERFDESGKGKGIAGREEM) show a composition bias toward basic and acidic residues.

The protein belongs to the TPPP family. As to expression, expressed in spermatids. Detected in liver cancer (at protein level).

It is found in the cytoplasm. It localises to the cytosol. Its subcellular location is the cell projection. The protein localises to the cilium. The protein resides in the flagellum. In terms of biological role, probable regulator of microtubule dynamics required for sperm motility. In contrast to other members of the family, has no microtubule bundling activity. In Homo sapiens (Human), this protein is Tubulin polymerization-promoting protein family member 2.